The following is a 249-amino-acid chain: Chymase (249 aa).

An N-terminal signal peptide occupies residues 1–19 (MHCLPLTLLLLLLCSRAEA). The propeptide at 20–21 (EE) is activation peptide. Residues 22-245 (IIGGTESKPH…YRPWINKVLK (224 aa)) form the Peptidase S1 domain. Cys-51 and Cys-67 are oxidised to a cystine. Residues His-66 and Asp-110 each act as charge relay system in the active site. Disulfide bonds link Cys-144–Cys-209 and Cys-175–Cys-188. Ser-203 functions as the Charge relay system in the catalytic mechanism.

This sequence belongs to the peptidase S1 family. Granzyme subfamily.

Its subcellular location is the secreted. It is found in the cytoplasmic granule. The enzyme catalyses Preferential cleavage: Phe-|-Xaa &gt; Tyr-|-Xaa &gt; Trp-|-Xaa &gt; Leu-|-Xaa.. Functionally, major secreted protease of mast cells with suspected roles in vasoactive peptide generation, extracellular matrix degradation, and regulation of gland secretion. In Canis lupus familiaris (Dog), this protein is Chymase (CMA1).